The sequence spans 443 residues: C4-dicarboxylate transport protein (443 aa).

Transmembrane regions (helical) follow at residues 10 to 30, 46 to 66, 78 to 98, 130 to 150, 152 to 172, 199 to 219, 224 to 244, 291 to 311, 332 to 352, and 354 to 374; these read SLYFQVIVAIAIGILLGHFYP, LIKMVIAPIIFCTVVSGIAGM, YALLYFEIVSTIALLIGLIVV, SIVGFILNIIPATIVGAFANG, ILQVLMFSVVFGFALHRLGAY, PLGALGAMAFTIGAYGVGSLV, LMICFYITCVVFVLVVLGAIC, VVGLVIPTGYSFNLDGTSIYL, ITLLLVLLLSSKGAAGVTGSG, and IVLAATLSAVGHLPVAGLALI. The segment at 415–443 is disordered; that stretch reads ELASGGRPITDTRETDDLGVAEGPAPSIK.

This sequence belongs to the dicarboxylate/amino acid:cation symporter (DAACS) (TC 2.A.23) family.

The protein localises to the cell inner membrane. In terms of biological role, responsible for the transport of dicarboxylates such as succinate, fumarate, and malate from the periplasm across the membrane. In Pseudomonas fluorescens (strain ATCC BAA-477 / NRRL B-23932 / Pf-5), this protein is C4-dicarboxylate transport protein.